Reading from the N-terminus, the 189-residue chain is Probable nicotinate-nucleotide adenylyltransferase (189 aa).

This sequence belongs to the NadD family.

The catalysed reaction is nicotinate beta-D-ribonucleotide + ATP + H(+) = deamido-NAD(+) + diphosphate. The protein operates within cofactor biosynthesis; NAD(+) biosynthesis; deamido-NAD(+) from nicotinate D-ribonucleotide: step 1/1. Catalyzes the reversible adenylation of nicotinate mononucleotide (NaMN) to nicotinic acid adenine dinucleotide (NaAD). This is Probable nicotinate-nucleotide adenylyltransferase from Bacillus mycoides (strain KBAB4) (Bacillus weihenstephanensis).